The primary structure comprises 88 residues: uncharacterized protein (88 aa).

An N-terminal signal peptide occupies residues 1 to 23; that stretch reads MAVSGLRLTIVWGLLVLILTCQA. A compositionally biased stretch (basic and acidic residues) spans 25 to 40; it reads DKPEGKPDEQPHDSGK. A disordered region spans residues 25–45; the sequence is DKPEGKPDEQPHDSGKNSEPA.

The protein resides in the secreted. This is an uncharacterized protein from Bos taurus (Bovine).